Consider the following 444-residue polypeptide: Transcription activator AKTR-3 (444 aa).

The segment at residues 16-43 (CDFCTQSKLRCNKNKPSCRRCTIQQQPC) is a DNA-binding region (zn(2)-C6 fungal-type). Positions 49-89 (RRTGRPPKHPRTANDCQEANGQHGEQDPVTSTPGGSCQQQS) are disordered. Residues 50-59 (RTGRPPKHPR) are compositionally biased toward basic residues. Residues 76–89 (PVTSTPGGSCQQQS) show a composition bias toward polar residues.

It is found in the nucleus. Functionally, transcription factor that regulates the expression of the gene clusters that mediate the biosynthesis of the host-selective toxins (HSTs) AK-toxins responsible for Japanese pear black spot disease by the Japanese pear pathotype. AK-toxins are esters of 9,10-epoxy 8-hydroxy 9-methyldecatrienoic acid (EDA). On cellular level, AK-toxins affect plasma membrane of susceptible cells and cause a sudden increase in loss of K(+) after a few minutes of toxin treatment. The chain is Transcription activator AKTR-3 from Alternaria alternata (Alternaria rot fungus).